The following is a 193-amino-acid chain: Ion-translocating oxidoreductase complex subunit A (193 aa).

A run of 6 helical transmembrane segments spans residues 5 to 25, 39 to 59, 62 to 82, 102 to 122, 134 to 154, and 171 to 191; these read LMLFIGTVLVNNFVLVKFLGL, LGMGMATTFVMTLASICAWLI, FILLPLNIPYLRTLAFIFIIA, LLGIFLPLITTNCAVLGVALL, ALYGFSAAVGFSLVMVLFAAI, and SIALITAGLMSLAFMGFTGLV.

It belongs to the NqrDE/RnfAE family. As to quaternary structure, the complex is composed of six subunits: RnfA, RnfB, RnfC, RnfD, RnfE and RnfG.

The protein resides in the cell inner membrane. Its function is as follows. Part of a membrane-bound complex that couples electron transfer with translocation of ions across the membrane. This Sodalis glossinidius (strain morsitans) protein is Ion-translocating oxidoreductase complex subunit A.